We begin with the raw amino-acid sequence, 453 residues long: Tubulin alpha-2 chain (453 aa).

GTP is bound at residue glutamine 11. Lysine 40 is subject to N6-acetyllysine. Glutamate 71, glycine 144, threonine 145, threonine 179, asparagine 206, and asparagine 228 together coordinate GTP. Glutamate 71 provides a ligand contact to Mg(2+). Glutamate 254 is a catalytic residue. A disordered region spans residues 432 to 453 (YEEVGAETAEGEGEEEDFGEEY).

It belongs to the tubulin family. Dimer of alpha and beta chains. A typical microtubule is a hollow water-filled tube with an outer diameter of 25 nm and an inner diameter of 15 nM. Alpha-beta heterodimers associate head-to-tail to form protofilaments running lengthwise along the microtubule wall with the beta-tubulin subunit facing the microtubule plus end conferring a structural polarity. Microtubules usually have 13 protofilaments but different protofilament numbers can be found in some organisms and specialized cells. The cofactor is Mg(2+). Post-translationally, undergoes a tyrosination/detyrosination cycle, the cyclic removal and re-addition of a C-terminal tyrosine residue by the enzymes tubulin tyrosine carboxypeptidase (TTCP) and tubulin tyrosine ligase (TTL), respectively. Acetylation of alpha chains at Lys-40 stabilizes microtubules and affects affinity and processivity of microtubule motors. This modification has a role in multiple cellular functions, ranging from cell motility, cell cycle progression or cell differentiation to intracellular trafficking and signaling.

The protein localises to the cytoplasm. It localises to the cytoskeleton. The catalysed reaction is GTP + H2O = GDP + phosphate + H(+). Functionally, tubulin is the major constituent of microtubules, a cylinder consisting of laterally associated linear protofilaments composed of alpha- and beta-tubulin heterodimers. Microtubules grow by the addition of GTP-tubulin dimers to the microtubule end, where a stabilizing cap forms. Below the cap, tubulin dimers are in GDP-bound state, owing to GTPase activity of alpha-tubulin. The polypeptide is Tubulin alpha-2 chain (TUBA2) (Pelvetia fastigiata (Brown alga)).